A 238-amino-acid chain; its full sequence is Phosphoribosylaminoimidazole-succinocarboxamide synthase (238 aa).

It belongs to the SAICAR synthetase family.

It carries out the reaction 5-amino-1-(5-phospho-D-ribosyl)imidazole-4-carboxylate + L-aspartate + ATP = (2S)-2-[5-amino-1-(5-phospho-beta-D-ribosyl)imidazole-4-carboxamido]succinate + ADP + phosphate + 2 H(+). It participates in purine metabolism; IMP biosynthesis via de novo pathway; 5-amino-1-(5-phospho-D-ribosyl)imidazole-4-carboxamide from 5-amino-1-(5-phospho-D-ribosyl)imidazole-4-carboxylate: step 1/2. This chain is Phosphoribosylaminoimidazole-succinocarboxamide synthase, found in Nitrosococcus oceani (strain ATCC 19707 / BCRC 17464 / JCM 30415 / NCIMB 11848 / C-107).